The primary structure comprises 169 residues: S-ribosylhomocysteine lyase (169 aa).

Residues histidine 54, histidine 58, and cysteine 128 each coordinate Fe cation.

It belongs to the LuxS family. As to quaternary structure, homodimer. The cofactor is Fe cation.

The catalysed reaction is S-(5-deoxy-D-ribos-5-yl)-L-homocysteine = (S)-4,5-dihydroxypentane-2,3-dione + L-homocysteine. Functionally, involved in the synthesis of autoinducer 2 (AI-2) which is secreted by bacteria and is used to communicate both the cell density and the metabolic potential of the environment. The regulation of gene expression in response to changes in cell density is called quorum sensing. Catalyzes the transformation of S-ribosylhomocysteine (RHC) to homocysteine (HC) and 4,5-dihydroxy-2,3-pentadione (DPD). The sequence is that of S-ribosylhomocysteine lyase from Shewanella pealeana (strain ATCC 700345 / ANG-SQ1).